The sequence spans 169 residues: MLATRALSLIGKRAISTSVCLRAHGSVVKSEDYALPSYVDRRDYPLPDVAHVKLLSASQKALKEKEKADWSSLSRDEKVQLYRIQFNESFAEMNKGTNEWKTVVGLAMFFIGFTALVLIWEKSYVYGPIPHTFDRDWVAMQTKRMLDMKVNPIQGFSAKWDYNKNEWKK.

A mitochondrion-targeting transit peptide spans 1 to 22; sequence MLATRALSLIGKRAISTSVCLR. The Mitochondrial matrix portion of the chain corresponds to 23–98; it reads AHGSVVKSED…SFAEMNKGTN (76 aa). Lys29 carries the post-translational modification N6-acetyllysine; alternate. An N6-succinyllysine; alternate modification is found at Lys29. An N6-acetyllysine modification is found at Lys53. Ser56 and Ser58 each carry phosphoserine. Lys60 is modified (N6-acetyllysine; alternate). An N6-succinyllysine; alternate modification is found at Lys60. Position 67 is an N6-acetyllysine (Lys67). A helical transmembrane segment spans residues 99–124; the sequence is EWKTVVGLAMFFIGFTALVLIWEKSY. At 125–169 the chain is on the mitochondrial intermembrane side; sequence VYGPIPHTFDRDWVAMQTKRMLDMKVNPIQGFSAKWDYNKNEWKK.

The protein belongs to the cytochrome c oxidase IV family. In terms of assembly, component of the cytochrome c oxidase (complex IV, CIV), a multisubunit enzyme composed of 14 subunits. The complex is composed of a catalytic core of 3 subunits MT-CO1, MT-CO2 and MT-CO3, encoded in the mitochondrial DNA, and 11 supernumerary subunits COX4I, COX5A, COX5B, COX6A, COX6B, COX6C, COX7A, COX7B, COX7C, COX8 and NDUFA4, which are encoded in the nuclear genome. The complex exists as a monomer or a dimer and forms supercomplexes (SCs) in the inner mitochondrial membrane with NADH-ubiquinone oxidoreductase (complex I, CI) and ubiquinol-cytochrome c oxidoreductase (cytochrome b-c1 complex, complex III, CIII), resulting in different assemblies (supercomplex SCI(1)III(2)IV(1) and megacomplex MCI(2)III(2)IV(2)). Interacts with PHB2; the interaction decreases in absence of SPHK2. Interacts with AFG1L. Interacts with ABCB7; this interaction allows the regulation of cellular iron homeostasis and cellular reactive oxygen species (ROS) levels in cardiomyocytes. Interacts with FLVCR2; this interaction occurs in the absence of heme and is disrupted upon heme binding. Interacts with IRGC.

The protein localises to the mitochondrion inner membrane. Its pathway is energy metabolism; oxidative phosphorylation. Component of the cytochrome c oxidase, the last enzyme in the mitochondrial electron transport chain which drives oxidative phosphorylation. The respiratory chain contains 3 multisubunit complexes succinate dehydrogenase (complex II, CII), ubiquinol-cytochrome c oxidoreductase (cytochrome b-c1 complex, complex III, CIII) and cytochrome c oxidase (complex IV, CIV), that cooperate to transfer electrons derived from NADH and succinate to molecular oxygen, creating an electrochemical gradient over the inner membrane that drives transmembrane transport and the ATP synthase. Cytochrome c oxidase is the component of the respiratory chain that catalyzes the reduction of oxygen to water. Electrons originating from reduced cytochrome c in the intermembrane space (IMS) are transferred via the dinuclear copper A center (CU(A)) of subunit 2 and heme A of subunit 1 to the active site in subunit 1, a binuclear center (BNC) formed by heme A3 and copper B (CU(B)). The BNC reduces molecular oxygen to 2 water molecules using 4 electrons from cytochrome c in the IMS and 4 protons from the mitochondrial matrix. The chain is Cytochrome c oxidase subunit 4 isoform 1, mitochondrial (Cox4i1) from Rattus norvegicus (Rat).